Consider the following 154-residue polypeptide: Large ribosomal subunit protein uL13 (154 aa).

It belongs to the universal ribosomal protein uL13 family. As to quaternary structure, part of the 50S ribosomal subunit.

Functionally, this protein is one of the early assembly proteins of the 50S ribosomal subunit, although it is not seen to bind rRNA by itself. It is important during the early stages of 50S assembly. This is Large ribosomal subunit protein uL13 from Brucella suis (strain ATCC 23445 / NCTC 10510).